A 406-amino-acid chain; its full sequence is Leucine aminopeptidase 1 (406 aa).

The signal sequence occupies residues 1–18 (MKVTNASLLALLLPAVSG). Positions 19-94 (RFVETGEPDR…LRAMTASRKK (76 aa)) are excised as a propeptide. A glycan (N-linked (GlcNAc...) asparagine) is linked at N186. H194, D213, E252, and D279 together coordinate Zn(2+). The N-linked (GlcNAc...) asparagine glycan is linked to N306. Residues C328 and C332 are joined by a disulfide bond. H361 contacts Zn(2+).

This sequence belongs to the peptidase M28 family. M28E subfamily. As to quaternary structure, monomer. Zn(2+) serves as cofactor.

It localises to the secreted. In terms of biological role, extracellular aminopeptidase that allows assimilation of proteinaceous substrates. The sequence is that of Leucine aminopeptidase 1 (LAP1) from Chaetomium globosum (strain ATCC 6205 / CBS 148.51 / DSM 1962 / NBRC 6347 / NRRL 1970) (Soil fungus).